The chain runs to 152 residues: Large ribosomal subunit protein uL15 (152 aa).

This sequence belongs to the universal ribosomal protein uL15 family. As to quaternary structure, part of the 50S ribosomal subunit.

In terms of biological role, binds to the 23S rRNA. The chain is Large ribosomal subunit protein uL15 from Staphylothermus marinus (strain ATCC 43588 / DSM 3639 / JCM 9404 / F1).